Here is a 102-residue protein sequence, read N- to C-terminus: Large ribosomal subunit protein bL21 (102 aa).

It belongs to the bacterial ribosomal protein bL21 family. In terms of assembly, part of the 50S ribosomal subunit. Contacts protein L20.

This protein binds to 23S rRNA in the presence of protein L20. The chain is Large ribosomal subunit protein bL21 from Geobacillus thermodenitrificans (strain NG80-2).